Consider the following 367-residue polypeptide: Phosphoribosylaminoimidazole-succinocarboxamide synthase (367 aa).

Belongs to the SAICAR synthetase family.

The catalysed reaction is 5-amino-1-(5-phospho-D-ribosyl)imidazole-4-carboxylate + L-aspartate + ATP = (2S)-2-[5-amino-1-(5-phospho-beta-D-ribosyl)imidazole-4-carboxamido]succinate + ADP + phosphate + 2 H(+). The protein operates within purine metabolism; IMP biosynthesis via de novo pathway; 5-amino-1-(5-phospho-D-ribosyl)imidazole-4-carboxamide from 5-amino-1-(5-phospho-D-ribosyl)imidazole-4-carboxylate: step 1/2. The protein is Phosphoribosylaminoimidazole-succinocarboxamide synthase of Shewanella sp. (strain MR-4).